Reading from the N-terminus, the 383-residue chain is Probable cell wall hydrolase LytN (383 aa).

Positions 1–49 are cleaved as a signal peptide; it reads MFVYYCKECFIMNKQQSKVRYSIRKVSIGILSISIGMFLALGMSNKAYA. In terms of domain architecture, LysM spans 175–219; it reads QIYTVKKGDTLSAIALKYKTTVSNIQNTNNIANPNLIFIGQKLKV. One can recognise a Peptidase C51 domain in the interval 241 to 378; it reads NSSTLNYLKT…NYENDMIFIR (138 aa).

The protein resides in the secreted. Probably involved in peptidoglycan hydrolysis. This chain is Probable cell wall hydrolase LytN (lytN), found in Staphylococcus aureus (strain NCTC 8325 / PS 47).